The primary structure comprises 697 residues: Polyribonucleotide nucleotidyltransferase (697 aa).

D488 and D494 together coordinate Mg(2+). One can recognise a KH domain in the interval 555 to 614 (PTFEVITINPDKIRDVIGKGGATIRQITEETKAAIDIEDNGTVRVFGETKAAARAAIAKI). The region spanning 624–692 (GKIYDGKVIR…NRGRIKLSMK (69 aa)) is the S1 motif domain.

This sequence belongs to the polyribonucleotide nucleotidyltransferase family. In terms of assembly, component of the RNA degradosome, which is a multiprotein complex involved in RNA processing and mRNA degradation. Requires Mg(2+) as cofactor.

The protein resides in the cytoplasm. It catalyses the reaction RNA(n+1) + phosphate = RNA(n) + a ribonucleoside 5'-diphosphate. Its function is as follows. Involved in mRNA degradation. Catalyzes the phosphorolysis of single-stranded polyribonucleotides processively in the 3'- to 5'-direction. The sequence is that of Polyribonucleotide nucleotidyltransferase from Acinetobacter baylyi (strain ATCC 33305 / BD413 / ADP1).